The following is a 190-amino-acid chain: Carbonic anhydrase 2 (190 aa).

Belongs to the beta-class carbonic anhydrase family. In terms of assembly, homohexamer.

Its subcellular location is the cytoplasm. The enzyme catalyses hydrogencarbonate + H(+) = CO2 + H2O. Reversible hydration of carbon dioxide. In Flaveria linearis (Narrowleaf yellowtops), this protein is Carbonic anhydrase 2.